The primary structure comprises 166 residues: MFPMVTEFMNYGQQTVRAARYIGQGFMITLSHANRLPVTIQYPYEKLITSERFRGRIHFEFDKCIACEVCVRVCPIDLPVVDWKLETDIRKKRLLNYSIDFGICIFCGNCVEYCPTNCLSMTEEYELSTYDRHELNYNQIALGRLPMSVIDDYTIRTILNLPEIKT.

4Fe-4S ferredoxin-type domains are found at residues 55-84 (GRIH…VDWK) and 95-124 (LNYS…MTEE). [4Fe-4S] cluster contacts are provided by C64, C67, C70, C74, C104, C107, C110, and C114.

Belongs to the complex I 23 kDa subunit family. As to quaternary structure, NDH is composed of at least 16 different subunits, 5 of which are encoded in the nucleus. The cofactor is [4Fe-4S] cluster.

The protein localises to the plastid. It is found in the chloroplast thylakoid membrane. It carries out the reaction a plastoquinone + NADH + (n+1) H(+)(in) = a plastoquinol + NAD(+) + n H(+)(out). The catalysed reaction is a plastoquinone + NADPH + (n+1) H(+)(in) = a plastoquinol + NADP(+) + n H(+)(out). NDH shuttles electrons from NAD(P)H:plastoquinone, via FMN and iron-sulfur (Fe-S) centers, to quinones in the photosynthetic chain and possibly in a chloroplast respiratory chain. The immediate electron acceptor for the enzyme in this species is believed to be plastoquinone. Couples the redox reaction to proton translocation, and thus conserves the redox energy in a proton gradient. This is NAD(P)H-quinone oxidoreductase subunit I, chloroplastic from Pentanema britannica (British yellowhead).